Reading from the N-terminus, the 71-residue chain is uncharacterized protein (71 aa).

Positions 1-23 are cleaved as a signal peptide; it reads MTLLIILILKYLLCLENLKNISL. Residues N20, N28, N44, and N50 are each glycosylated (N-linked (GlcNAc...) asparagine).

It localises to the secreted. This is an uncharacterized protein from Dictyostelium discoideum (Social amoeba).